The following is a 434-amino-acid chain: Glutamate-1-semialdehyde 2,1-aminomutase (434 aa).

Lysine 273 carries the N6-(pyridoxal phosphate)lysine modification.

This sequence belongs to the class-III pyridoxal-phosphate-dependent aminotransferase family. HemL subfamily. As to quaternary structure, homodimer. Pyridoxal 5'-phosphate is required as a cofactor.

It localises to the cytoplasm. It carries out the reaction (S)-4-amino-5-oxopentanoate = 5-aminolevulinate. Its pathway is porphyrin-containing compound metabolism; protoporphyrin-IX biosynthesis; 5-aminolevulinate from L-glutamyl-tRNA(Glu): step 2/2. This Polynucleobacter asymbioticus (strain DSM 18221 / CIP 109841 / QLW-P1DMWA-1) (Polynucleobacter necessarius subsp. asymbioticus) protein is Glutamate-1-semialdehyde 2,1-aminomutase.